A 244-amino-acid chain; its full sequence is Probable cytokinin riboside 5'-monophosphate phosphoribohydrolase LOGL2 (244 aa).

Substrate-binding positions include glutamate 91, 109–110, and 126–132; these read RK and GYGTLEE.

It belongs to the LOG family.

It catalyses the reaction N(6)-(dimethylallyl)adenosine 5'-phosphate + H2O = N(6)-dimethylallyladenine + D-ribose 5-phosphate. The enzyme catalyses 9-ribosyl-trans-zeatin 5'-phosphate + H2O = trans-zeatin + D-ribose 5-phosphate. Its function is as follows. Cytokinin-activating enzyme working in the direct activation pathway. Phosphoribohydrolase that converts inactive cytokinin nucleotides to the biologically active free-base forms. This chain is Probable cytokinin riboside 5'-monophosphate phosphoribohydrolase LOGL2 (LOGL2), found in Oryza sativa subsp. japonica (Rice).